A 247-amino-acid polypeptide reads, in one-letter code: 2,3-bisphosphoglycerate-dependent phosphoglycerate mutase (247 aa).

Substrate is bound by residues 8–15, 21–22, R60, 87–90, K98, 114–115, and 183–184; these read RHGESVWN, TG, ERHY, RR, and GN. H9 serves as the catalytic Tele-phosphohistidine intermediate. E87 (proton donor/acceptor) is an active-site residue.

The protein belongs to the phosphoglycerate mutase family. BPG-dependent PGAM subfamily. Homodimer.

The catalysed reaction is (2R)-2-phosphoglycerate = (2R)-3-phosphoglycerate. The protein operates within carbohydrate degradation; glycolysis; pyruvate from D-glyceraldehyde 3-phosphate: step 3/5. Catalyzes the interconversion of 2-phosphoglycerate and 3-phosphoglycerate. This is 2,3-bisphosphoglycerate-dependent phosphoglycerate mutase from Geobacter metallireducens (strain ATCC 53774 / DSM 7210 / GS-15).